A 248-amino-acid polypeptide reads, in one-letter code: 5'-nucleotidase SurE (248 aa).

4 residues coordinate a divalent metal cation: Asp-8, Asp-9, Ser-39, and Asn-91.

This sequence belongs to the SurE nucleotidase family. The cofactor is a divalent metal cation.

Its subcellular location is the cytoplasm. It carries out the reaction a ribonucleoside 5'-phosphate + H2O = a ribonucleoside + phosphate. In terms of biological role, nucleotidase that shows phosphatase activity on nucleoside 5'-monophosphates. This Shewanella amazonensis (strain ATCC BAA-1098 / SB2B) protein is 5'-nucleotidase SurE.